The sequence spans 781 residues: Beta-mannosyltransferase 4 (781 aa).

Residues 1–17 lie on the Cytoplasmic side of the membrane; the sequence is MTKSYMPLFRSPRQFKK. The chain crosses the membrane as a helical span at residues 18–38; the sequence is IYFILIPLILAVIILHVFFDG. Residues 39–781 are Extracellular-facing; it reads FNKISEYSPT…EKEDDDDIEV (743 aa). The stretch at 640–733 forms a coiled coil; the sequence is KLGDSEAAIK…AKDEDKNEDE (94 aa). 2 stretches are compositionally biased toward basic and acidic residues: residues 663-728 and 736-750; these read KAEK…KDED and KEKNDESGLTEKSEV. The tract at residues 663–781 is disordered; it reads KAEKEKAEKE…EKEDDDDIEV (119 aa). Positions 751–781 are enriched in acidic residues; the sequence is EENGENTNEGGEDDGDGDGEEEKEDDDDIEV.

It belongs to the BMT family.

The protein resides in the membrane. Beta-mannosyltransferase involved in cell wall biosynthesis. Required for the elongation of beta-mannose chains on the acid-labile fraction of cell wall phosphopeptidomannan. In Candida albicans (strain SC5314 / ATCC MYA-2876) (Yeast), this protein is Beta-mannosyltransferase 4 (BMT4).